A 635-amino-acid chain; its full sequence is MISQAYPLLSSIHSPADLKKLSLHELELVAAECRKKVIELVSQNGGHFGSSLGVVELTVALHYVYQSPTDRIIWDVGHQAYVHKILTGRLAQMETNRRYHGLAGFPKRSESPHDAFGTGHASTSISAAAGLAAARDLAGRKEKVVAIIGDGSLTGGMAFEAMNHLGDTKSDVLVILNDNQMAISPSTGGLKNYLVNLTLNKTYNRLRKFVWDSLSLLHNEIGETAKTAVHRIEDGIKAAFTPGAYFEALGFRYFGPIDGHNMEQLIKALREMRQLHHPKLLHVITTKGKGFKPAEENQPKWHASVGGFDIETGKNVKAPGKPAKPKYQEVFGEALVELALKDPTITAITAAMPSGTSLDLFQQAIPSRCFDVGIAEQHAVTFAAGLACGGFKPVFAVYSTFLQRAYDQLIHDVALQNLHVVFAIDRAGLVGEDGPTHHGAFDLSYLNVVPNLTIMAPGDEQELRNMLYTALYDIKGPVAIRYPRGSGSGATLHKEFTPVPVGRGRILRDGKSVALLGIGTMSNRALETAALLEAAGLDPLVCDMRFLKPLDTEIIDMAASRCTHIVTIEENSIIGGFGSNVVNYLHHAHPGIKCISFGLPDAFVTHGSMDELYREVGLDAESLSGKILEFYKDKP.

Thiamine diphosphate-binding positions include H78 and 119–121 (GHA). Position 150 (D150) interacts with Mg(2+). Residues 151 to 152 (GS), N179, F291, and E376 contribute to the thiamine diphosphate site. N179 contributes to the Mg(2+) binding site.

The protein belongs to the transketolase family. DXPS subfamily. Homodimer. Requires Mg(2+) as cofactor. Thiamine diphosphate is required as a cofactor.

It catalyses the reaction D-glyceraldehyde 3-phosphate + pyruvate + H(+) = 1-deoxy-D-xylulose 5-phosphate + CO2. It participates in metabolic intermediate biosynthesis; 1-deoxy-D-xylulose 5-phosphate biosynthesis; 1-deoxy-D-xylulose 5-phosphate from D-glyceraldehyde 3-phosphate and pyruvate: step 1/1. Functionally, catalyzes the acyloin condensation reaction between C atoms 2 and 3 of pyruvate and glyceraldehyde 3-phosphate to yield 1-deoxy-D-xylulose-5-phosphate (DXP). The chain is 1-deoxy-D-xylulose-5-phosphate synthase from Chlorobaculum tepidum (strain ATCC 49652 / DSM 12025 / NBRC 103806 / TLS) (Chlorobium tepidum).